We begin with the raw amino-acid sequence, 795 residues long: Phenylalanine--tRNA ligase beta subunit (795 aa).

In terms of domain architecture, tRNA-binding spans 39–148 (AGSFHGVVVG…ADAPIGTDIR (110 aa)). One can recognise a B5 domain in the interval 401 to 476 (PKRATITLRR…RVYGYNNIPD (76 aa)). The Mg(2+) site is built by aspartate 454, aspartate 460, glutamate 463, and glutamate 464. One can recognise an FDX-ACB domain in the interval 701-794 (SRFPANRRDI…LKERFQASLR (94 aa)).

This sequence belongs to the phenylalanyl-tRNA synthetase beta subunit family. Type 1 subfamily. As to quaternary structure, tetramer of two alpha and two beta subunits. Requires Mg(2+) as cofactor.

It is found in the cytoplasm. It catalyses the reaction tRNA(Phe) + L-phenylalanine + ATP = L-phenylalanyl-tRNA(Phe) + AMP + diphosphate + H(+). The protein is Phenylalanine--tRNA ligase beta subunit of Escherichia coli O157:H7.